The primary structure comprises 87 residues: Probable Fe(2+)-trafficking protein (87 aa).

The protein belongs to the Fe(2+)-trafficking protein family. As to quaternary structure, monomer.

Its function is as follows. Could be a mediator in iron transactions between iron acquisition and iron-requiring processes, such as synthesis and/or repair of Fe-S clusters in biosynthetic enzymes. The chain is Probable Fe(2+)-trafficking protein from Buchnera aphidicola subsp. Baizongia pistaciae (strain Bp).